A 425-amino-acid chain; its full sequence is Serine--tRNA ligase (425 aa).

233 to 235 serves as a coordination point for L-serine; it reads TAE. 264-266 serves as a coordination point for ATP; it reads RRE. An L-serine-binding site is contributed by Glu287. 351–354 provides a ligand contact to ATP; sequence EISS. Ser387 is an L-serine binding site.

The protein belongs to the class-II aminoacyl-tRNA synthetase family. Type-1 seryl-tRNA synthetase subfamily. As to quaternary structure, homodimer. The tRNA molecule binds across the dimer.

It is found in the cytoplasm. It catalyses the reaction tRNA(Ser) + L-serine + ATP = L-seryl-tRNA(Ser) + AMP + diphosphate + H(+). It carries out the reaction tRNA(Sec) + L-serine + ATP = L-seryl-tRNA(Sec) + AMP + diphosphate + H(+). It participates in aminoacyl-tRNA biosynthesis; selenocysteinyl-tRNA(Sec) biosynthesis; L-seryl-tRNA(Sec) from L-serine and tRNA(Sec): step 1/1. Catalyzes the attachment of serine to tRNA(Ser). Is also able to aminoacylate tRNA(Sec) with serine, to form the misacylated tRNA L-seryl-tRNA(Sec), which will be further converted into selenocysteinyl-tRNA(Sec). The protein is Serine--tRNA ligase of Thermotoga maritima (strain ATCC 43589 / DSM 3109 / JCM 10099 / NBRC 100826 / MSB8).